The following is a 419-amino-acid chain: MFVDQARIFVKGGDGGNGIVAFRREKYVPMGGPSGGDGGRGANVILVADEGLKTLMDFKYRRHFKAERGAHGQGKNMHGAWGQDLRVKVPVGTVIKDDESGEVLADLLLQGQEAVVAKGGRGGRGNARFSSAINKAPSFSENGEPGEEKWIRLELKLLADVGLVGFPNAGKSTLISRVSAARPKIADYPFTTLVPNLGVVMTKERDTFVLADIPGLIEGAHQGLGLGHEFLRHIERTRVILFILDAAQTEGRDVVEDYRILYRELELHNPDLLKRPQLIVANKMDIPDARDNARRLESELGKTVHCISAVTGQGVEELMGKTYALLQAAPQEIPSGEEPVVRRFEEELPFKIDKVDGVFEVSGPRIEKLVVMTNFNSDEGLQRFQRTVIKMGLEEALKEHGIKEGDSVRIKDFEFEFTE.

The region spanning 1 to 158 is the Obg domain; sequence MFVDQARIFV…KWIRLELKLL (158 aa). In terms of domain architecture, OBG-type G spans 159–327; the sequence is ADVGLVGFPN…LMGKTYALLQ (169 aa). Residues 165 to 172, 190 to 194, 212 to 215, 282 to 285, and 308 to 310 each bind GTP; these read GFPNAGKS, FTTLV, DIPG, NKMD, and SAV. Residues S172 and T192 each coordinate Mg(2+). The OCT domain occupies 342-419; the sequence is RRFEEELPFK…IKDFEFEFTE (78 aa).

The protein belongs to the TRAFAC class OBG-HflX-like GTPase superfamily. OBG GTPase family. In terms of assembly, monomer. Requires Mg(2+) as cofactor.

The protein localises to the cytoplasm. In terms of biological role, an essential GTPase which binds GTP, GDP and possibly (p)ppGpp with moderate affinity, with high nucleotide exchange rates and a fairly low GTP hydrolysis rate. Plays a role in control of the cell cycle, stress response, ribosome biogenesis and in those bacteria that undergo differentiation, in morphogenesis control. This is GTPase Obg from Syntrophomonas wolfei subsp. wolfei (strain DSM 2245B / Goettingen).